The primary structure comprises 224 residues: Magnesium-protoporphyrin O-methyltransferase (224 aa).

The protein belongs to the class I-like SAM-binding methyltransferase superfamily. Magnesium protoporphyrin O-methyltransferase family.

It carries out the reaction Mg-protoporphyrin IX + S-adenosyl-L-methionine = Mg-protoporphyrin IX 13-monomethyl ester + S-adenosyl-L-homocysteine. The protein operates within porphyrin-containing compound metabolism; bacteriochlorophyll biosynthesis (light-independent). In terms of biological role, converts Mg-protoporphyrin IX to Mg-protoporphyrin IX methylester using S-adenosyl-L-methionine as a cofactor. The protein is Magnesium-protoporphyrin O-methyltransferase (bchM) of Rhodobacter capsulatus (Rhodopseudomonas capsulata).